The chain runs to 73 residues: Protein RALF-like 10 (73 aa).

Positions 1-17 are cleaved as a signal peptide; that stretch reads MKALVICLLVIFAAVIA. 2 disulfides stabilise this stretch: Cys-35–Cys-44 and Cys-64–Cys-70.

This sequence belongs to the plant rapid alkalinization factor (RALF) family. In terms of tissue distribution, expressed in flowers.

It localises to the secreted. Its function is as follows. Cell signaling peptide that may regulate plant stress, growth, and development. Mediates a rapid alkalinization of extracellular space by mediating a transient increase in the cytoplasmic Ca(2+) concentration leading to a calcium-dependent signaling events through a cell surface receptor and a concomitant activation of some intracellular mitogen-activated protein kinases. This Arabidopsis thaliana (Mouse-ear cress) protein is Protein RALF-like 10 (RALFL10).